A 493-amino-acid polypeptide reads, in one-letter code: Cytochrome c-552 (493 aa).

Residues 1-25 (MEKKLKSWQGWLLFCGAMAVVFVLG) form the signal peptide. Heme c is bound at residue H116. Heme is bound by residues C144, C147, and K148. Heme c-binding residues include C182, C185, H186, C224, C227, and H228. Positions 230, 231, 276, and 278 each coordinate Ca(2+). Y231 serves as a coordination point for substrate. Substrate is bound at residue H279. Positions 290, 297, 300, 301, 315, 328, 331, 332, and 407 each coordinate heme c.

The protein belongs to the cytochrome c-552 family. It depends on Ca(2+) as a cofactor. Heme c is required as a cofactor.

It localises to the periplasm. It carries out the reaction 6 Fe(III)-[cytochrome c] + NH4(+) + 2 H2O = 6 Fe(II)-[cytochrome c] + nitrite + 8 H(+). The protein operates within nitrogen metabolism; nitrate reduction (assimilation). Catalyzes the reduction of nitrite to ammonia, consuming six electrons in the process. The polypeptide is Cytochrome c-552 (Bacteroides fragilis (strain ATCC 25285 / DSM 2151 / CCUG 4856 / JCM 11019 / LMG 10263 / NCTC 9343 / Onslow / VPI 2553 / EN-2)).